A 124-amino-acid polypeptide reads, in one-letter code: UPF0235 protein (124 aa).

Residues 1 to 22 (MTKKGSSNSSKQQQQQQQIIIN) form a disordered region.

It belongs to the UPF0235 family.

The chain is UPF0235 protein from Dictyostelium discoideum (Social amoeba).